The primary structure comprises 467 residues: Asparagine--tRNA ligase (467 aa).

It belongs to the class-II aminoacyl-tRNA synthetase family. Homodimer.

The protein resides in the cytoplasm. It catalyses the reaction tRNA(Asn) + L-asparagine + ATP = L-asparaginyl-tRNA(Asn) + AMP + diphosphate + H(+). In Baumannia cicadellinicola subsp. Homalodisca coagulata, this protein is Asparagine--tRNA ligase.